Here is a 240-residue protein sequence, read N- to C-terminus: Ribose-5-phosphate isomerase A (240 aa).

Residues 41-44, 94-97, and 107-110 each bind substrate; these read TGST, DGAD, and KGGG. Glutamate 116 serves as the catalytic Proton acceptor. Lysine 134 is a binding site for substrate.

Belongs to the ribose 5-phosphate isomerase family. As to quaternary structure, homodimer.

The catalysed reaction is aldehydo-D-ribose 5-phosphate = D-ribulose 5-phosphate. It participates in carbohydrate degradation; pentose phosphate pathway; D-ribose 5-phosphate from D-ribulose 5-phosphate (non-oxidative stage): step 1/1. In terms of biological role, catalyzes the reversible conversion of ribose-5-phosphate to ribulose 5-phosphate. The chain is Ribose-5-phosphate isomerase A from Polaromonas sp. (strain JS666 / ATCC BAA-500).